The primary structure comprises 319 residues: 33 kDa chaperonin (319 aa).

Disulfide bonds link C239-C241 and C272-C275. Residues 300 to 319 (EVSEEMKKAEEKEKEEKNKK) are disordered.

It belongs to the HSP33 family. Under oxidizing conditions two disulfide bonds are formed involving the reactive cysteines. Under reducing conditions zinc is bound to the reactive cysteines and the protein is inactive.

The protein resides in the cytoplasm. Its function is as follows. Redox regulated molecular chaperone. Protects both thermally unfolding and oxidatively damaged proteins from irreversible aggregation. Plays an important role in the bacterial defense system toward oxidative stress. This is 33 kDa chaperonin from Clostridium perfringens (strain ATCC 13124 / DSM 756 / JCM 1290 / NCIMB 6125 / NCTC 8237 / Type A).